A 476-amino-acid chain; its full sequence is Cytochrome c oxidase subunit 1 (476 aa).

The chain crosses the membrane as a helical span at residues 19–39 (LYYLWFSFLFGIYGFLLSVIL). Ca(2+) is bound at residue Glu-42. Transmembrane regions (helical) follow at residues 61–81 (MIFT…GLFG), 105–125 (ISLL…AAEF), 144–164 (LSPV…IASI), 194–214 (LIIT…GVLM), 240–260 (LLWF…FGII), 278–298 (MILA…HHMY), 309–329 (FFTS…FNWL), and 345–365 (LLSL…VILG). Residue His-66 coordinates Fe(II)-heme a. Position 246 (His-246) interacts with Cu cation. The 1'-histidyl-3'-tyrosine (His-Tyr) cross-link spans 246–250 (HPEVY). Residue Tyr-250 coordinates O2. Cu cation contacts are provided by His-295 and His-296. Positions 374 and 375 each coordinate Mg(2+). 2 helical membrane-spanning segments follow: residues 379–399 (VIAH…FTSV) and 415–435 (TIIV…FLPM). A heme a3-binding site is contributed by His-382. Residue His-384 participates in Fe(II)-heme a binding. A Ca(2+)-binding site is contributed by Pro-448. Residues 455-475 (NGWNMICSIGSTMTLFGLLIF) form a helical membrane-spanning segment.

This sequence belongs to the heme-copper respiratory oxidase family. As to quaternary structure, component of the cytochrome c oxidase (complex IV, CIV), a multisubunit enzyme composed of a catalytic core of 3 subunits and several supernumerary subunits. The complex exists as a monomer or a dimer and forms supercomplexes (SCs) in the inner mitochondrial membrane with ubiquinol-cytochrome c oxidoreductase (cytochrome b-c1 complex, complex III, CIII). The cofactor is heme. Requires Cu cation as cofactor.

It localises to the mitochondrion inner membrane. It carries out the reaction 4 Fe(II)-[cytochrome c] + O2 + 8 H(+)(in) = 4 Fe(III)-[cytochrome c] + 2 H2O + 4 H(+)(out). Its pathway is energy metabolism; oxidative phosphorylation. Functionally, component of the cytochrome c oxidase, the last enzyme in the mitochondrial electron transport chain which drives oxidative phosphorylation. The respiratory chain contains 3 multisubunit complexes succinate dehydrogenase (complex II, CII), ubiquinol-cytochrome c oxidoreductase (cytochrome b-c1 complex, complex III, CIII) and cytochrome c oxidase (complex IV, CIV), that cooperate to transfer electrons derived from NADH and succinate to molecular oxygen, creating an electrochemical gradient over the inner membrane that drives transmembrane transport and the ATP synthase. Cytochrome c oxidase is the component of the respiratory chain that catalyzes the reduction of oxygen to water. Electrons originating from reduced cytochrome c in the intermembrane space (IMS) are transferred via the dinuclear copper A center (CU(A)) of subunit 2 and heme A of subunit 1 to the active site in subunit 1, a binuclear center (BNC) formed by heme A3 and copper B (CU(B)). The BNC reduces molecular oxygen to 2 water molecules using 4 electrons from cytochrome c in the IMS and 4 protons from the mitochondrial matrix. The sequence is that of Cytochrome c oxidase subunit 1 (COI) from Plasmodium chabaudi.